The primary structure comprises 419 residues: Endothiapepsin (419 aa).

The N-terminal stretch at 1 to 20 (MSSPLKNALVTAMLAGGALS) is a signal peptide. Residues 21–89 (SPTKQHVGIP…QNSTSGLAER (69 aa)) constitute a propeptide, activation peptide. Positions 106-417 (YITPVQIGTP…GATTPTLGFA (312 aa)) constitute a Peptidase A1 domain. Catalysis depends on residues D124 and S288. A disulfide bond links C344 and C379.

This sequence belongs to the peptidase A1 family.

It catalyses the reaction Hydrolysis of proteins with specificity similar to that of pepsin A, prefers hydrophobic residues at P1 and P1', but does not cleave 14-Ala-|-Leu-15 in the B chain of insulin or Z-Glu-Tyr. Clots milk.. The protein is Endothiapepsin (EAPA) of Cryphonectria parasitica (Chestnut blight fungus).